The following is a 283-amino-acid chain: Bifunctional protein FolD (283 aa).

NADP(+) contacts are provided by residues 164-166, Ser-189, and Ile-230; that span reads GRS.

It belongs to the tetrahydrofolate dehydrogenase/cyclohydrolase family. Homodimer.

The catalysed reaction is (6R)-5,10-methylene-5,6,7,8-tetrahydrofolate + NADP(+) = (6R)-5,10-methenyltetrahydrofolate + NADPH. The enzyme catalyses (6R)-5,10-methenyltetrahydrofolate + H2O = (6R)-10-formyltetrahydrofolate + H(+). It participates in one-carbon metabolism; tetrahydrofolate interconversion. Its function is as follows. Catalyzes the oxidation of 5,10-methylenetetrahydrofolate to 5,10-methenyltetrahydrofolate and then the hydrolysis of 5,10-methenyltetrahydrofolate to 10-formyltetrahydrofolate. This is Bifunctional protein FolD from Lacticaseibacillus casei (strain BL23) (Lactobacillus casei).